Consider the following 767-residue polypeptide: Cap-specific mRNA (nucleoside-2'-O-)-methyltransferase 2 (767 aa).

In terms of domain architecture, Adrift-type SAM-dependent 2'-O-MTase spans 109-322 (ELCTQAWCKF…VYVVCLRYKG (214 aa)). The active site involves K117. S-adenosyl-L-methionine contacts are provided by G148, W167, and D235. The active site involves D235. K275 serves as the catalytic Proton acceptor.

The protein localises to the nucleus. The protein resides in the cytoplasm. The enzyme catalyses a 5'-end (N(7)-methyl 5'-triphosphoguanosine)-(2'-O-methyl-ribonucleoside)-(ribonucleotide) in mRNA + S-adenosyl-L-methionine = a 5'-end (N(7)-methyl 5'-triphosphoguanosine)-(2'-O-methyl-ribonucleoside)-(2'-O-methyl-ribonucleotide) in mRNA + S-adenosyl-L-homocysteine + H(+). S-adenosyl-L-methionine-dependent methyltransferase that mediates mRNA cap2 2'-O-ribose methylation to the 5'-cap structure of mRNAs. Methylates the ribose of the second nucleotide of a m(7)GpppG-capped mRNA and small nuclear RNA (snRNA) (cap0) to produce m(7)GpppRmpNm (cap2). Recognizes a guanosine cap on RNA independently of its N(7) methylation status. Display cap2 methylation on both cap0 and cap1. Displays a preference for cap1 RNAs. This chain is Cap-specific mRNA (nucleoside-2'-O-)-methyltransferase 2 (Cmtr2), found in Mus musculus (Mouse).